Reading from the N-terminus, the 74-residue chain is ATP synthase subunit c (74 aa).

Helical transmembrane passes span Leu-5–Gly-25 and Leu-49–Leu-69.

This sequence belongs to the ATPase C chain family. F-type ATPases have 2 components, F(1) - the catalytic core - and F(0) - the membrane proton channel. F(1) has five subunits: alpha(3), beta(3), gamma(1), delta(1), epsilon(1). F(0) has four main subunits: a(1), b(1), b'(1) and c(10-14). The alpha and beta chains form an alternating ring which encloses part of the gamma chain. F(1) is attached to F(0) by a central stalk formed by the gamma and epsilon chains, while a peripheral stalk is formed by the delta, b and b' chains.

The protein resides in the cell inner membrane. Functionally, f(1)F(0) ATP synthase produces ATP from ADP in the presence of a proton or sodium gradient. F-type ATPases consist of two structural domains, F(1) containing the extramembraneous catalytic core and F(0) containing the membrane proton channel, linked together by a central stalk and a peripheral stalk. During catalysis, ATP synthesis in the catalytic domain of F(1) is coupled via a rotary mechanism of the central stalk subunits to proton translocation. In terms of biological role, key component of the F(0) channel; it plays a direct role in translocation across the membrane. A homomeric c-ring of between 10-14 subunits forms the central stalk rotor element with the F(1) delta and epsilon subunits. The sequence is that of ATP synthase subunit c from Roseobacter denitrificans (strain ATCC 33942 / OCh 114) (Erythrobacter sp. (strain OCh 114)).